Reading from the N-terminus, the 404-residue chain is CD2 homolog (404 aa).

An N-terminal signal peptide occupies residues 1-16 (MFITLIFLSYINIVLS). Over 17–225 (NNYWARLNET…QNYFLENIHT (209 aa)) the chain is Extracellular. N-linked (GlcNAc...) asparagine; by host glycans are attached at residues asparagine 24, asparagine 87, asparagine 92, asparagine 96, asparagine 122, asparagine 139, asparagine 167, asparagine 193, asparagine 200, and asparagine 206. Disulfide bonds link cysteine 140-cysteine 207 and cysteine 147-cysteine 190. A helical transmembrane segment spans residues 226–246 (LFYIIIFIVSGLIASIFISII). Topologically, residues 247–404 (TFLSLRKRKK…ISLIHVDRII (158 aa)) are cytoplasmic. The disordered stretch occupies residues 260–295 (EIESPPPESNEEEQCQHDDTTSIHEPSPREPLLPKP). The span at 273–287 (QCQHDDTTSIHEPSP) shows a compositional bias: basic and acidic residues. 7 consecutive repeat copies span residues 322 to 327 (NPCPPP), 328 to 333 (KPCPPP), 334 to 339 (KPCPPP), 340 to 345 (KPCPPP), 346 to 351 (KPCPPP), 352 to 357 (KPCPPP), and 358 to 363 (KPCPPP). A 7 X 6 AA tandem repeats of [KN]-P-C-P-P-P region spans residues 322 to 363 (NPCPPPKPCPPPKPCPPPKPCPPPKPCPPPKPCPPPKPCPPP). The span at 357–388 (PKPCPPPKPCSSPESYSPPKPLPSIPLLPNIP) shows a compositional bias: pro residues. The interval 357–390 (PKPCPPPKPCSSPESYSPPKPLPSIPLLPNIPPL) is disordered.

This sequence belongs to the asfivirus CD2 homolog protein family. Both glycosylated and nonglycosylated forms interact (via C-terminus) with the host AP-1 complex. Cleaved into two fragments of 63 kDa and 26 kDa containing respectively the glycosylated N-terminus and the nonglycosylated C-terminus. A full-length 89-kDa glycosylated form also exists.

It localises to the host membrane. Its subcellular location is the virion membrane. The protein localises to the host Golgi apparatus. Its function is as follows. May play an immunosuppressive role by inhibiting lymphocyte proliferation and subsequently facilitating viral replication and generalization of infection. Responsible for viral hemadsorption, which may help viral spread. Increases virus replication in the tick vector at the step of virus uptake or replication in the tick gut. May play a role in the host Golgi reorganization to yield viral factories. May play a role in host cell penetration. The protein is CD2 homolog of African swine fever virus (isolate Tick/South Africa/Pretoriuskop Pr4/1996) (ASFV).